The chain runs to 234 residues: Protein rgg8 (234 aa).

The protein resides in the cytoplasm. Its subcellular location is the nucleus. The sequence is that of Protein rgg8 (rgg8) from Schizosaccharomyces pombe (strain 972 / ATCC 24843) (Fission yeast).